Consider the following 28-residue polypeptide: Potassium channel toxin alpha-KTx 9.3 (28 aa).

3 disulfides stabilise this stretch: Cys3/Cys19, Cys6/Cys24, and Cys10/Cys26.

Belongs to the short scorpion toxin superfamily. Potassium channel inhibitor family. Alpha-KTx 09 subfamily. As to expression, expressed by the venom gland.

It localises to the secreted. Its function is as follows. Inhibits voltage-gated potassium channels. This Aegaeobuthus nigrocinctus (Scorpion) protein is Potassium channel toxin alpha-KTx 9.3.